A 102-amino-acid polypeptide reads, in one-letter code: uncharacterized protein (102 aa).

A signal peptide spans methionine 1 to glycine 19.

This is an uncharacterized protein from Saccharomyces cerevisiae (strain ATCC 204508 / S288c) (Baker's yeast).